A 461-amino-acid polypeptide reads, in one-letter code: Fumarate hydratase class II (461 aa).

Substrate is bound by residues 97-99 (SGT), arginine 125, 128-131 (HPND), 138-140 (SSN), and threonine 186. Histidine 187 serves as the catalytic Proton donor/acceptor. Serine 317 is a catalytic residue. Substrate-binding positions include serine 318 and 323-325 (KVN).

It belongs to the class-II fumarase/aspartase family. Fumarase subfamily. As to quaternary structure, homotetramer.

The protein localises to the cytoplasm. It carries out the reaction (S)-malate = fumarate + H2O. It participates in carbohydrate metabolism; tricarboxylic acid cycle; (S)-malate from fumarate: step 1/1. In terms of biological role, involved in the TCA cycle. Catalyzes the stereospecific interconversion of fumarate to L-malate. This Ralstonia nicotianae (strain ATCC BAA-1114 / GMI1000) (Ralstonia solanacearum) protein is Fumarate hydratase class II.